The primary structure comprises 561 residues: Acylcarnitine hydrolase (561 aa).

A signal peptide spans 1 to 26 (MTRNQLHNWLNAGFFGLLLLLIHVQG). Cys97 and Cys125 are oxidised to a cystine. The active-site Acyl-ester intermediate is the Ser230. Cysteines 282 and 293 form a disulfide. Residues Glu347 and His459 each act as charge relay system in the active site. The Prevents secretion from ER signature appears at 558–561 (HREL).

Belongs to the type-B carboxylesterase/lipase family. As to expression, detected in liver (at protein level).

The protein resides in the microsome. The protein localises to the endoplasmic reticulum. The catalysed reaction is an O-acyl-(R)-carnitine + H2O = (R)-carnitine + a fatty acid + H(+). The enzyme catalyses all-trans-retinyl hexadecanoate + H2O = all-trans-retinol + hexadecanoate + H(+). In terms of biological role, hydrolase with high activity towards palmitoylcarnitine. Is also active with p-nitrophenylacetate and alpha-naphthylacetate. May also hydrolyze retinyl esters. The protein is Acylcarnitine hydrolase of Mus musculus (Mouse).